The chain runs to 119 residues: Protein phosphatase EYA3 (119 aa).

The protein belongs to the HAD-like hydrolase superfamily. EYA family. It depends on Mg(2+) as a cofactor.

The protein localises to the cytoplasm. It localises to the nucleus. The enzyme catalyses O-phospho-L-tyrosyl-[protein] + H2O = L-tyrosyl-[protein] + phosphate. In terms of biological role, tyrosine phosphatase that specifically dephosphorylates 'Tyr-142' of histone H2AX (H2AXY142ph). 'Tyr-142' phosphorylation of histone H2AX plays a central role in DNA repair and acts as a mark that distinguishes between apoptotic and repair responses to genotoxic stress. Promotes efficient DNA repair by dephosphorylating H2AX, promoting the recruitment of DNA repair complexes containing MDC1. Its function as histone phosphatase probably explains its role in transcription regulation during organogenesis. May be involved in development of the eye. The protein is Protein phosphatase EYA3 (EYA3) of Gallus gallus (Chicken).